The chain runs to 271 residues: Undecaprenyl-diphosphatase (271 aa).

8 helical membrane-spanning segments follow: residues 2-22 (LLIL…FVPV), 42-62 (ANLF…VVYW), 80-100 (LRFW…GFSL), 108-128 (LFNP…MIIV), 149-168 (SIFV…SRSA), 175-195 (WIAG…AIPV), 214-234 (IEFI…LVVI), and 248-268 (IFAI…IFKI).

It belongs to the UppP family.

It is found in the cell membrane. The catalysed reaction is di-trans,octa-cis-undecaprenyl diphosphate + H2O = di-trans,octa-cis-undecaprenyl phosphate + phosphate + H(+). Functionally, catalyzes the dephosphorylation of undecaprenyl diphosphate (UPP). Confers resistance to bacitracin. The protein is Undecaprenyl-diphosphatase of Clostridium tetani (strain Massachusetts / E88).